The primary structure comprises 149 residues: 6,7-dimethyl-8-ribityllumazine synthase (149 aa).

Residues phenylalanine 22, 56 to 58 (ALE), and 80 to 82 (AVI) contribute to the 5-amino-6-(D-ribitylamino)uracil site. 85–86 (ET) is a binding site for (2S)-2-hydroxy-3-oxobutyl phosphate. Residue histidine 88 is the Proton donor of the active site. Asparagine 113 provides a ligand contact to 5-amino-6-(D-ribitylamino)uracil. Arginine 127 serves as a coordination point for (2S)-2-hydroxy-3-oxobutyl phosphate.

It belongs to the DMRL synthase family.

The catalysed reaction is (2S)-2-hydroxy-3-oxobutyl phosphate + 5-amino-6-(D-ribitylamino)uracil = 6,7-dimethyl-8-(1-D-ribityl)lumazine + phosphate + 2 H2O + H(+). It functions in the pathway cofactor biosynthesis; riboflavin biosynthesis; riboflavin from 2-hydroxy-3-oxobutyl phosphate and 5-amino-6-(D-ribitylamino)uracil: step 1/2. In terms of biological role, catalyzes the formation of 6,7-dimethyl-8-ribityllumazine by condensation of 5-amino-6-(D-ribitylamino)uracil with 3,4-dihydroxy-2-butanone 4-phosphate. This is the penultimate step in the biosynthesis of riboflavin. The sequence is that of 6,7-dimethyl-8-ribityllumazine synthase from Methylobacillus flagellatus (strain ATCC 51484 / DSM 6875 / VKM B-1610 / KT).